The chain runs to 335 residues: tRNA N6-adenosine threonylcarbamoyltransferase (335 aa).

Residues His109, His113, and Tyr130 each contribute to the a divalent metal cation site. Substrate contacts are provided by residues 130 to 134 (YVSGG), Asp162, Gly177, Glu181, and Asn266. Position 294 (Asp294) interacts with a divalent metal cation.

The protein belongs to the KAE1 / TsaD family. In terms of assembly, component of the EKC/KEOPS complex composed of at least GON7, TP53RK, TPRKB, OSGEP and LAGE3; the whole complex dimerizes. It depends on a divalent metal cation as a cofactor.

The protein localises to the cytoplasm. The protein resides in the nucleus. It catalyses the reaction L-threonylcarbamoyladenylate + adenosine(37) in tRNA = N(6)-L-threonylcarbamoyladenosine(37) in tRNA + AMP + H(+). Functionally, component of the EKC/KEOPS complex that is required for the formation of a threonylcarbamoyl group on adenosine at position 37 (t(6)A37) in tRNAs that read codons beginning with adenine. The complex is probably involved in the transfer of the threonylcarbamoyl moiety of threonylcarbamoyl-AMP (TC-AMP) to the N6 group of A37. OSGEP likely plays a direct catalytic role in this reaction, but requires other protein(s) of the complex to fulfill this activity. The polypeptide is tRNA N6-adenosine threonylcarbamoyltransferase (Bos taurus (Bovine)).